A 62-amino-acid polypeptide reads, in one-letter code: Large ribosomal subunit protein uL30 (62 aa).

This sequence belongs to the universal ribosomal protein uL30 family. As to quaternary structure, part of the 50S ribosomal subunit.

The protein is Large ribosomal subunit protein uL30 of Beutenbergia cavernae (strain ATCC BAA-8 / DSM 12333 / CCUG 43141 / JCM 11478 / NBRC 16432 / NCIMB 13614 / HKI 0122).